The chain runs to 174 residues: Transcription antitermination protein NusB (174 aa).

It belongs to the NusB family.

Functionally, involved in transcription antitermination. Required for transcription of ribosomal RNA (rRNA) genes. Binds specifically to the boxA antiterminator sequence of the ribosomal RNA (rrn) operons. The chain is Transcription antitermination protein NusB from Rhodopseudomonas palustris (strain TIE-1).